Here is a 503-residue protein sequence, read N- to C-terminus: Protein FAM124A (503 aa).

Positions 434–470 are disordered; the sequence is LAQSDTVPGRQNHSSDSLHSVSDISSSPCPVFPSTPA. Polar residues predominate over residues 436-445; the sequence is QSDTVPGRQN. A compositionally biased stretch (low complexity) spans 447-460; sequence SSDSLHSVSDISSS.

This sequence belongs to the FAM124 family.

The polypeptide is Protein FAM124A (fam124a) (Xenopus tropicalis (Western clawed frog)).